Consider the following 110-residue polypeptide: Putative UPF0377 protein YKL223W (110 aa).

Belongs to the UPF0377 family.

The chain is Putative UPF0377 protein YKL223W from Saccharomyces cerevisiae (strain ATCC 204508 / S288c) (Baker's yeast).